The primary structure comprises 212 residues: Uridine kinase (212 aa).

ATP is bound at residue Gly-13–Ser-20.

The protein belongs to the uridine kinase family.

The protein resides in the cytoplasm. It catalyses the reaction uridine + ATP = UMP + ADP + H(+). It carries out the reaction cytidine + ATP = CMP + ADP + H(+). It functions in the pathway pyrimidine metabolism; CTP biosynthesis via salvage pathway; CTP from cytidine: step 1/3. Its pathway is pyrimidine metabolism; UMP biosynthesis via salvage pathway; UMP from uridine: step 1/1. The sequence is that of Uridine kinase from Shewanella baltica (strain OS155 / ATCC BAA-1091).